A 78-amino-acid chain; its full sequence is Acyl carrier protein (78 aa).

The Carrier domain maps to 1 to 76 (MAIHPKVKDI…DVASYLEKKG (76 aa)). O-(pantetheine 4'-phosphoryl)serine is present on serine 36.

The protein belongs to the acyl carrier protein (ACP) family. Post-translationally, 4'-phosphopantetheine is transferred from CoA to a specific serine of apo-ACP by AcpS. This modification is essential for activity because fatty acids are bound in thioester linkage to the sulfhydryl of the prosthetic group.

Its subcellular location is the cytoplasm. It functions in the pathway lipid metabolism; fatty acid biosynthesis. Functionally, carrier of the growing fatty acid chain in fatty acid biosynthesis. The polypeptide is Acyl carrier protein (Bdellovibrio bacteriovorus (strain ATCC 15356 / DSM 50701 / NCIMB 9529 / HD100)).